The chain runs to 524 residues: MFHCIPLWRCNRHVESIDKRHCSLVYVPEEIYRYARSLEELLLDANQLRELPEQFFQLVKLRKLGLSDNEIQRLPPEIANFMQLVELDVSRNEIPEIPESISFCKALQVADFSGNPLTRLPESFPELQNLTCLSVNDISLQSLPENIGNLYNLASLELRENLLTYLPDSLTQLRRLEELDLGNNEIYNLPESIGALLHLKDLWLDGNQLSELPQEIGNLKNLLCLDVSENRLERLPEEISGLTSLTDLVISQNLLETIPDGIGKLKKLSILKVDQNRLTQLPEAVGECESLTELVLTENQLLTLPKSIGKLKKLSNLNADRNKLVSLPKEIGGCCSLTVFCVRDNRLTRIPAEVSQATELHVLDVAGNRLLHLPLSLTALKLKALWLSDNQSQPLLTFQTDTDYTTGEKILTCVLLPQLPSEPTCQENLPRCGALENLVNDVSDEAWNERAVNRVSAIRFVEDEKDEEDNETRTLLRRATPHPGELKHMKKTVENLRNDMNAAKGLDSNKNEVNHAIDRVTTSV.

LRR repeat units follow at residues 11-34 (NRHV…IYRY), 35-58 (ARSL…FFQL), 60-81 (KLRK…IANF), 83-105 (QLVE…SFCK), 107-126 (LQVA…SFPE), 127-149 (LQNL…NIGN), 150-172 (LYNL…SLTQ), 173-196 (LRRL…IGAL), 198-218 (HLKD…EIGN), 219-242 (LKNL…ISGL), 244-264 (SLTD…GIGK), 265-288 (LKKL…VGEC), 290-310 (SLTE…SIGK), 311-334 (LKKL…IGGC), 336-356 (SLTV…EVSQ), 357-380 (ATEL…LTAL), and 382-405 (LKAL…TDYT). At threonine 480 the chain carries Phosphothreonine. Residues 484–512 (GELKHMKKTVENLRNDMNAAKGLDSNKNE) adopt a coiled-coil conformation.

As to quaternary structure, interacts with DLG1 and DLG4. May form a complex with DLG1 and ERBIN, where interaction between LRRC1 and ERBIN is indirect. In terms of tissue distribution, expressed strongly in testis and placenta, followed by heart, lung, kidney, thyroid, trachea, colon, prostate and pancreas.

It localises to the cytoplasm. Its subcellular location is the membrane. In Homo sapiens (Human), this protein is Leucine-rich repeat-containing protein 1 (LRRC1).